The chain runs to 126 residues: uncharacterized protein (126 aa).

The tract at residues 1–46 is disordered; sequence MREEEAAAVVTVPQAGRDGEQPGPPAGLGCAAVRGEPGGGGPQESR.

It localises to the cytoplasm. It is found in the cytoskeleton. The protein localises to the cilium basal body. This is an uncharacterized protein from Bos taurus (Bovine).